A 122-amino-acid polypeptide reads, in one-letter code: Basic phospholipase A2 Cdr-13 (122 aa).

Disulfide bonds link Cys-26–Cys-115, Cys-28–Cys-44, Cys-43–Cys-95, Cys-49–Cys-122, Cys-50–Cys-88, Cys-57–Cys-81, and Cys-75–Cys-86. The Ca(2+) site is built by Tyr-27, Gly-29, and Gly-31. The active site involves His-47. Asp-48 contacts Ca(2+). Residue Asp-89 is part of the active site.

Ca(2+) serves as cofactor. As to expression, expressed by the venom gland.

It localises to the secreted. The enzyme catalyses a 1,2-diacyl-sn-glycero-3-phosphocholine + H2O = a 1-acyl-sn-glycero-3-phosphocholine + a fatty acid + H(+). In terms of biological role, snake venom phospholipase A2 (PLA2) that induces myonecrosis and edema upon subcutaneous injections in mice. In vitro, causes a potent blockade of neuromuscular transmission in young chicken biventer cervicis preparation and produces cytotoxicity in murine C2C12 skeletal muscle myotubes and lack cytolytic activity upon myoblasts in vitro. PLA2 catalyzes the calcium-dependent hydrolysis of the 2-acyl groups in 3-sn-phosphoglycerides. The polypeptide is Basic phospholipase A2 Cdr-13 (Crotalus durissus ruruima (South American rattlesnake)).